The following is a 953-amino-acid chain: Valine--tRNA ligase (953 aa).

Residues 42–52 (PNVTGSLHMGH) carry the 'HIGH' region motif. The 'KMSKS' region signature appears at 554–558 (KMSKS). Residue Lys-557 coordinates ATP. Residues 884–952 (LIDKDAELDR…LEQQKATIAA (69 aa)) adopt a coiled-coil conformation.

Belongs to the class-I aminoacyl-tRNA synthetase family. ValS type 1 subfamily. Monomer.

The protein localises to the cytoplasm. It catalyses the reaction tRNA(Val) + L-valine + ATP = L-valyl-tRNA(Val) + AMP + diphosphate. Catalyzes the attachment of valine to tRNA(Val). As ValRS can inadvertently accommodate and process structurally similar amino acids such as threonine, to avoid such errors, it has a 'posttransfer' editing activity that hydrolyzes mischarged Thr-tRNA(Val) in a tRNA-dependent manner. This is Valine--tRNA ligase from Vibrio cholerae serotype O1 (strain ATCC 39315 / El Tor Inaba N16961).